The sequence spans 913 residues: Glutamate receptor ionotropic, kainate 2 (913 aa).

The Extracellular segment spans residues 1–566 (MCAGTMKIIS…VFSFLNPLSP (566 aa)). 7 N-linked (GlcNAc...) asparagine glycosylation sites follow: Asn-72, Asn-78, Asn-280, Asn-383, Asn-417, Asn-428, and Asn-435. Cysteines 101 and 352 form a disulfide. 3 residues coordinate L-glutamate: Pro-521, Ala-523, and Arg-528. Residue Asn-551 is glycosylated (N-linked (GlcNAc...) asparagine). The chain crosses the membrane as a helical span at residues 567 to 587 (DIWMYILLAYLGVSCVLFVIA). Residues 588–643 (RFSPYEWYNPHPCNPDSDVVENNFTLLNSFWFGVGALMQQGSELMPKALSTRIVGG) lie on the Cytoplasmic side of the membrane. A helical membrane pass occupies residues 644–664 (IWWFFTLIIISSYTANLAAFL). At 665–824 (TVERMESPID…KEASALGVQN (160 aa)) the chain is on the extracellular side. Residues Ala-694, Thr-695, and Glu-743 each coordinate L-glutamate. Cys-755 and Cys-809 form a disulfide bridge. An N-linked (GlcNAc...) asparagine glycan is attached at Asn-756. The chain crosses the membrane as a helical span at residues 825 to 845 (IGGIFIVLAAGLVLSVFVAVG). Over 846–913 (EFLYKSKKNA…RRLPGKETMA (68 aa)) the chain is Cytoplasmic.

Belongs to the glutamate-gated ion channel (TC 1.A.10.1) family. GRIK2 subfamily. Homotetramer and heterotetramer with GRIK5. Tetramers may be formed by the dimerization of dimers.

It is found in the cell membrane. Its subcellular location is the postsynaptic cell membrane. It catalyses the reaction Ca(2+)(in) = Ca(2+)(out). The enzyme catalyses Na(+)(in) = Na(+)(out). Its activity is regulated as follows. Cold receptor activity activated by temperatures between 10-19 degrees Celsius. Ionotropic glutamate receptor that functions as a cation-permeable ligand-gated ion channel, gated by L-glutamate and the glutamatergic agonist kainic acid. L-glutamate acts as an excitatory neurotransmitter at many synapses in the central nervous system. Binding of the excitatory neurotransmitter L-glutamate induces a conformation change, leading to the opening of the cation channel, and thereby converts the chemical signal to an electrical impulse. The receptor then desensitizes rapidly and enters a transient inactive state, characterized by the presence of bound agonist. Its function is as follows. Independent of its ionotropic glutamate receptor activity, acts as a thermoreceptor conferring sensitivity to cold temperatures. Functions in dorsal root ganglion neurons. This Xenopus laevis (African clawed frog) protein is Glutamate receptor ionotropic, kainate 2 (grik2).